The chain runs to 224 residues: Uracil-DNA glycosylase 2 (224 aa).

Aspartate 64 (proton acceptor) is an active-site residue.

This sequence belongs to the uracil-DNA glycosylase (UDG) superfamily. UNG family.

The protein localises to the cytoplasm. The catalysed reaction is Hydrolyzes single-stranded DNA or mismatched double-stranded DNA and polynucleotides, releasing free uracil.. Functionally, excises uracil residues from the DNA which can arise as a result of misincorporation of dUMP residues by DNA polymerase or due to deamination of cytosine. This Listeria monocytogenes serotype 4b (strain F2365) protein is Uracil-DNA glycosylase 2.